A 466-amino-acid chain; its full sequence is Amino acid permease 4 (466 aa).

Residues 1 to 22 (MDVPRPAFKCFDDDGRLKRSGT) are Cytoplasmic-facing. Transmembrane regions (helical) follow at residues 23-43 (VWTA…LSLA) and 44-64 (WAIG…FSFV). The Cytoplasmic portion of the chain corresponds to 65-111 (TYYSSTLLSDCYRTGDPVSGKRNYTYMDAVRSILGGFRFKICGLIQY). The chain crosses the membrane as a helical span at residues 112–132 (LNLFGITVGYTIAASISMMAI). Residues 133 to 177 (KRSNCFHESGGKNPCHMSSNPYMIMFGVTEILLSQIKDFDQIWWL) lie on the Extracellular side of the membrane. Residues 178 to 198 (SIVAAIMSFTYSAIGLALGII) form a helical membrane-spanning segment. At 199–226 (QVAANGVVKGSLTGISIGAVTQTQKIWR) the chain is on the cytoplasmic side. The helical transmembrane segment at 227–247 (TFQALGDIAFAYSYSVVLIEI) threads the bilayer. The Extracellular segment spans residues 248–266 (QDTVRSPPAESKTMKIATR). A helical transmembrane segment spans residues 267-287 (ISIAVTTTFYMLCGCMGYAAF). Topologically, residues 288 to 290 (GDK) are cytoplasmic. The chain crosses the membrane as a helical span at residues 291-311 (APGNLLTGFGFYNPFWLLDVA). The Extracellular segment spans residues 312–313 (NA). Residues 314-334 (AIVIHLVGAYQVFAQPIFAFI) form a helical membrane-spanning segment. Topologically, residues 335–369 (EKQAAARFPDSDLVTKEYEIRIPGFRSPYKVNVFR) are cytoplasmic. A helical transmembrane segment spans residues 370 to 390 (AVYRSGFVVLTTVISMLMPFF). The Extracellular segment spans residues 391 to 392 (ND). The helical transmembrane segment at 393-413 (VVGILGALGFWPLTVYFPVEM) threads the bilayer. Over 414-435 (YIRQRKVERWSMKWVCLQMLSC) the chain is Cytoplasmic. A helical transmembrane segment spans residues 436–456 (GCLMITLVAGVGSIAGVMLDL). Over 457-466 (KVYKPFKTTY) the chain is Extracellular.

It belongs to the amino acid/polyamine transporter 2 family. Amino acid/auxin permease (AAAP) (TC 2.A.18.2) subfamily. In terms of tissue distribution, expressed in leaves, stems and flowers.

The protein resides in the cell membrane. With respect to regulation, inhibited by 2,4-dinitrophenol. Amino acid-proton symporter. Stereospecific transporter with a broad specificity for neutral amino acids, favoring small amino acids such as alanine, asparagine and glutamine. Also accepts large aromatic residues such as in phenlalanine or tyrosine. This Arabidopsis thaliana (Mouse-ear cress) protein is Amino acid permease 4 (AAP4).